Here is a 224-residue protein sequence, read N- to C-terminus: Phosphoribosylformylglycinamidine synthase subunit PurQ (224 aa).

The Glutamine amidotransferase type-1 domain maps to 2 to 224 (KFAVIQFPGS…SILNHAEVKA (223 aa)). C86 (nucleophile) is an active-site residue. Catalysis depends on residues H195 and E197.

As to quaternary structure, part of the FGAM synthase complex composed of 1 PurL, 1 PurQ and 2 PurS subunits.

It is found in the cytoplasm. The catalysed reaction is N(2)-formyl-N(1)-(5-phospho-beta-D-ribosyl)glycinamide + L-glutamine + ATP + H2O = 2-formamido-N(1)-(5-O-phospho-beta-D-ribosyl)acetamidine + L-glutamate + ADP + phosphate + H(+). The enzyme catalyses L-glutamine + H2O = L-glutamate + NH4(+). It functions in the pathway purine metabolism; IMP biosynthesis via de novo pathway; 5-amino-1-(5-phospho-D-ribosyl)imidazole from N(2)-formyl-N(1)-(5-phospho-D-ribosyl)glycinamide: step 1/2. In terms of biological role, part of the phosphoribosylformylglycinamidine synthase complex involved in the purines biosynthetic pathway. Catalyzes the ATP-dependent conversion of formylglycinamide ribonucleotide (FGAR) and glutamine to yield formylglycinamidine ribonucleotide (FGAM) and glutamate. The FGAM synthase complex is composed of three subunits. PurQ produces an ammonia molecule by converting glutamine to glutamate. PurL transfers the ammonia molecule to FGAR to form FGAM in an ATP-dependent manner. PurS interacts with PurQ and PurL and is thought to assist in the transfer of the ammonia molecule from PurQ to PurL. The sequence is that of Phosphoribosylformylglycinamidine synthase subunit PurQ from Lactobacillus delbrueckii subsp. bulgaricus (strain ATCC 11842 / DSM 20081 / BCRC 10696 / JCM 1002 / NBRC 13953 / NCIMB 11778 / NCTC 12712 / WDCM 00102 / Lb 14).